The following is a 637-amino-acid chain: Chaperone protein DnaK (637 aa).

Threonine 198 is modified (phosphothreonine; by autocatalysis). The tract at residues 600–637 is disordered; that stretch reads IAQQQAQAQQAQGADAGAQSKDDDVVDAEFEEVKDDKK. Positions 601–618 are enriched in low complexity; it reads AQQQAQAQQAQGADAGAQ. Acidic residues predominate over residues 623–637; that stretch reads DVVDAEFEEVKDDKK.

The protein belongs to the heat shock protein 70 family.

Its function is as follows. Acts as a chaperone. The sequence is that of Chaperone protein DnaK from Vibrio parahaemolyticus serotype O3:K6 (strain RIMD 2210633).